The sequence spans 1024 residues: Error-prone DNA polymerase (1024 aa).

The protein belongs to the DNA polymerase type-C family. DnaE2 subfamily.

The protein localises to the cytoplasm. The catalysed reaction is DNA(n) + a 2'-deoxyribonucleoside 5'-triphosphate = DNA(n+1) + diphosphate. In terms of biological role, DNA polymerase involved in damage-induced mutagenesis and translesion synthesis (TLS). It is not the major replicative DNA polymerase. In Pseudomonas paraeruginosa (strain DSM 24068 / PA7) (Pseudomonas aeruginosa (strain PA7)), this protein is Error-prone DNA polymerase.